Reading from the N-terminus, the 365-residue chain is Phosphate acyltransferase (365 aa).

Belongs to the PlsX family. As to quaternary structure, homodimer. Probably interacts with PlsY.

The protein localises to the cytoplasm. The enzyme catalyses a fatty acyl-[ACP] + phosphate = an acyl phosphate + holo-[ACP]. The protein operates within lipid metabolism; phospholipid metabolism. Its function is as follows. Catalyzes the reversible formation of acyl-phosphate (acyl-PO(4)) from acyl-[acyl-carrier-protein] (acyl-ACP). This enzyme utilizes acyl-ACP as fatty acyl donor, but not acyl-CoA. This chain is Phosphate acyltransferase, found in Klebsiella pneumoniae subsp. pneumoniae (strain ATCC 700721 / MGH 78578).